A 175-amino-acid chain; its full sequence is Adenine phosphoribosyltransferase (175 aa).

It belongs to the purine/pyrimidine phosphoribosyltransferase family. In terms of assembly, homodimer.

It is found in the cytoplasm. It catalyses the reaction AMP + diphosphate = 5-phospho-alpha-D-ribose 1-diphosphate + adenine. It participates in purine metabolism; AMP biosynthesis via salvage pathway; AMP from adenine: step 1/1. Functionally, catalyzes a salvage reaction resulting in the formation of AMP, that is energically less costly than de novo synthesis. This Francisella philomiragia subsp. philomiragia (strain ATCC 25017 / CCUG 19701 / FSC 153 / O#319-036) protein is Adenine phosphoribosyltransferase.